A 321-amino-acid polypeptide reads, in one-letter code: Peroxidase 5 (321 aa).

The first 24 residues, 1 to 24 (MERFSLRFVLMMVSIILTSSICQA), serve as a signal peptide directing secretion. A Pyrrolidone carboxylic acid modification is found at Gln-25. Disulfide bonds link Cys-35–Cys-115, Cys-68–Cys-73, Cys-121–Cys-317, and Cys-201–Cys-227. His-66 acts as the Proton acceptor in catalysis. Positions 67, 70, 72, 74, and 76 each coordinate Ca(2+). Pro-164 contributes to the substrate binding site. His-194 contacts heme b. Residue Thr-195 coordinates Ca(2+). Asn-211 carries N-linked (GlcNAc...) asparagine glycosylation. Ca(2+) contacts are provided by Asp-240, Thr-243, and Asp-248. N-linked (GlcNAc...) asparagine glycosylation occurs at Asn-285.

Belongs to the peroxidase family. Classical plant (class III) peroxidase subfamily. Requires heme b as cofactor. Ca(2+) is required as a cofactor.

The protein localises to the secreted. It catalyses the reaction 2 a phenolic donor + H2O2 = 2 a phenolic radical donor + 2 H2O. Removal of H(2)O(2), oxidation of toxic reductants, biosynthesis and degradation of lignin, suberization, auxin catabolism, response to environmental stresses such as wounding, pathogen attack and oxidative stress. These functions might be dependent on each isozyme/isoform in each plant tissue. The chain is Peroxidase 5 (PER5) from Arabidopsis thaliana (Mouse-ear cress).